Consider the following 146-residue polypeptide: ATP synthase epsilon chain (146 aa).

The protein belongs to the ATPase epsilon chain family. F-type ATPases have 2 components, CF(1) - the catalytic core - and CF(0) - the membrane proton channel. CF(1) has five subunits: alpha(3), beta(3), gamma(1), delta(1), epsilon(1). CF(0) has three main subunits: a, b and c.

It is found in the cell membrane. Produces ATP from ADP in the presence of a proton gradient across the membrane. This is ATP synthase epsilon chain from Lactobacillus helveticus (strain DPC 4571).